Reading from the N-terminus, the 606-residue chain is Granule-bound starch synthase 1, chloroplastic/amyloplastic (606 aa).

The transit peptide at 1–76 (MSALTTSQLA…GSRRFPSVVV (76 aa)) directs the protein to the chloroplast. The segment at 29-67 (RHGFQGLKPRSPAGGDASSLSVTTSARATPKQQRSVQRG) is disordered. A compositionally biased stretch (polar residues) spans 46–66 (SSLSVTTSARATPKQQRSVQR). K97 contributes to the ADP-alpha-D-glucose binding site.

This sequence belongs to the glycosyltransferase 1 family. Bacterial/plant glycogen synthase subfamily.

It localises to the plastid. Its subcellular location is the chloroplast. The protein localises to the amyloplast. It catalyses the reaction an NDP-alpha-D-glucose + [(1-&gt;4)-alpha-D-glucosyl](n) = [(1-&gt;4)-alpha-D-glucosyl](n+1) + a ribonucleoside 5'-diphosphate + H(+). It functions in the pathway glycan biosynthesis; starch biosynthesis. Functionally, required for the synthesis of amylose in endosperm. The polypeptide is Granule-bound starch synthase 1, chloroplastic/amyloplastic (WAXY) (Oryza sativa (Rice)).